A 139-amino-acid chain; its full sequence is Oocyte zinc finger protein XlCOF14 (139 aa).

5 consecutive C2H2-type zinc fingers follow at residues 6 to 28 (FICS…SNVH), 33 to 55 (FPCT…QKIH), 61 to 83 (HKCT…HLSH), 89 to 111 (FSCF…QLSH), and 117 to 139 (FVCS…CHIH).

This sequence belongs to the krueppel C2H2-type zinc-finger protein family.

It localises to the nucleus. In terms of biological role, may be involved in transcriptional regulation. The chain is Oocyte zinc finger protein XlCOF14 from Xenopus laevis (African clawed frog).